We begin with the raw amino-acid sequence, 1447 residues long: DNA topoisomerase 2 (1447 aa).

Residues Asn72, Asn101, 129-131 (SSN), and 142-149 (GRNGYGAK) each bind ATP. Residues 323–325 (KKK) are interaction with DNA. 357 to 359 (QTK) contributes to the ATP binding site. The Toprim domain occupies 435 to 552 (CTLILTEGDS…ELLRLPFLEE (118 aa)). Mg(2+) contacts are provided by Glu441, Asp521, and Asp523. The 475-residue stretch at 695-1169 (IPSLVDGLKP…TPEMLWLDDL (475 aa)) folds into the Topo IIA-type catalytic domain. The O-(5'-phospho-DNA)-tyrosine intermediate role is filled by Tyr785. The interval 972-981 (KLTTTLSTNQ) is interaction with DNA. Disordered stretches follow at residues 1079 to 1110 (EDAEQADEEDEEEEEAAPSVSSKAKKEKEVDP), 1183 to 1231 (ERAE…DGEP), and 1246 to 1447 (AAAK…DFNC). The segment covering 1081–1094 (AEQADEEDEEEEEA) has biased composition (acidic residues). A compositionally biased stretch (basic and acidic residues) spans 1255–1281 (KEPKKPKEPKEPKVKKEPKGKQIKAEP). Over residues 1283–1293 (ASGDEVDEFDA) the composition is skewed to acidic residues. Residue Ser1284 is modified to Phosphoserine. 2 stretches are compositionally biased toward basic and acidic residues: residues 1310-1325 (VKKEPGEKKPRQKKEN) and 1332-1359 (SKIDFSKAKAKKSDDDVEEVTPRAERPG). Phosphoserine is present on Ser1344. Thr1352 carries the phosphothreonine modification. Residues Ser1374, Ser1385, Ser1392, and Ser1396 each carry the phosphoserine modification. The segment covering 1374-1394 (SDEEEDGGNVGSDDDGNASDD) has biased composition (acidic residues). Positions 1395-1408 (DSPKRPAKRGREDE) are enriched in basic and acidic residues. Residues 1413 to 1423 (AKKKAPPKKRR) show a composition bias toward basic residues. Positions 1427 to 1447 (ESDDDDIEIDEDDDDDSDFNC) are enriched in acidic residues.

This sequence belongs to the type II topoisomerase family. In terms of assembly, homodimer. Interacts with mod(mdg4). Interacts with barr. Interacts with ph-p. Interacts with mle; the interaction mediates association with the MSL dosage compensation complex. Mg(2+) is required as a cofactor. The cofactor is Mn(2+). It depends on Ca(2+) as a cofactor. In terms of processing, phosphorylated. Phosphorylation by casein kinase II enhances ATPase activity.

It is found in the nucleus. The protein localises to the chromosome. The protein resides in the cytoplasm. It catalyses the reaction ATP-dependent breakage, passage and rejoining of double-stranded DNA.. Functionally, control of topological states of DNA by transient breakage and subsequent rejoining of DNA strands. Topoisomerase II makes double-strand breaks. Essential during mitosis and meiosis for proper segregation of daughter chromosomes. During meiosis, it disrupts heterochromatic connections between achiasmate and chiasmate homologs after spindle assembly so that chromosomes can separate at prometaphase I. During mitosis, it functions in the separation of sister chromatids by establishing amphitelic kinetochore attachments in mitotic spindles. May have a role in chromatin condensation and chromosome structure. May be involved in X-chromosome dosage compensation, perhaps by modifying the topological state of compensated genes. Regulates activity of the gypsy chromatin insulator complex by binding to mod(mdg4) and preventing its degradation. The polypeptide is DNA topoisomerase 2 (Drosophila melanogaster (Fruit fly)).